A 330-amino-acid chain; its full sequence is DNA-directed RNA polymerase subunit alpha (330 aa).

The tract at residues 1-236 is alpha N-terminal domain (alpha-NTD); sequence MQGSVTEFLK…EQLDAFVDLR (236 aa). The alpha C-terminal domain (alpha-CTD) stretch occupies residues 250 to 330; the sequence is FDPILLRPVD…NWPPASIAED (81 aa).

This sequence belongs to the RNA polymerase alpha chain family. Homodimer. The RNAP catalytic core consists of 2 alpha, 1 beta, 1 beta' and 1 omega subunit. When a sigma factor is associated with the core the holoenzyme is formed, which can initiate transcription.

The enzyme catalyses RNA(n) + a ribonucleoside 5'-triphosphate = RNA(n+1) + diphosphate. Its function is as follows. DNA-dependent RNA polymerase catalyzes the transcription of DNA into RNA using the four ribonucleoside triphosphates as substrates. The protein is DNA-directed RNA polymerase subunit alpha of Vibrio parahaemolyticus serotype O3:K6 (strain RIMD 2210633).